The sequence spans 391 residues: uncharacterized protein (391 aa).

This sequence belongs to the mycobacterial PPE family.

This is an uncharacterized protein from Mycobacterium tuberculosis (strain CDC 1551 / Oshkosh).